Here is a 439-residue protein sequence, read N- to C-terminus: MVLLYQPKKQKKLRAAFTTIVQDLDYQGLGVAKIQGKTWFIENALPQEQVQVQVIEEKRQYGLGRVQKILQASPLRQTPRCAYYQICGGCQSQHIPIHLQRETKQKALFQRLTKLQKEAIEFMPMISGEAWHYRRRVRLSLYWDAKSKNLKIGFRQKNSQQIVNIRQCDVLDPLLNELLPKLHELLSTWSKPKTLGHIELVAADNGVAMLLRVTEKLAEHDRTLLLDFAFNHQVMLFVQDEKEICHLQGDLPYYQLDDGSILHFDIRDFIQVNRQLNQNMVNTALDWLDLKKKDNVLDLFCGMGNFTLPISRYVKSAVGIEGVLPMVEKARRNGERNHCHNVQFYQCDLSQSFTEQEWAKVPFDKILLDPPRSGAAFALNALCYLMAEKIVYVSCNPATLVRDVELLLKFGYQLKKVAMIDMFPHTSHLESISLFERNR.

The 59-residue stretch at 10–68 folds into the TRAM domain; that stretch reads QKKLRAAFTTIVQDLDYQGLGVAKIQGKTWFIENALPQEQVQVQVIEEKRQYGLGRVQK. Positions 81, 87, 90, and 168 each coordinate [4Fe-4S] cluster. 6 residues coordinate S-adenosyl-L-methionine: Gln271, Phe300, Asn305, Glu321, Asp348, and Asp369. Cys395 functions as the Nucleophile in the catalytic mechanism.

It belongs to the class I-like SAM-binding methyltransferase superfamily. RNA M5U methyltransferase family. RlmD subfamily.

The enzyme catalyses uridine(1939) in 23S rRNA + S-adenosyl-L-methionine = 5-methyluridine(1939) in 23S rRNA + S-adenosyl-L-homocysteine + H(+). Functionally, catalyzes the formation of 5-methyl-uridine at position 1939 (m5U1939) in 23S rRNA. The polypeptide is 23S rRNA (uracil(1939)-C(5))-methyltransferase RlmD (Histophilus somni (strain 129Pt) (Haemophilus somnus)).